The following is a 228-amino-acid chain: HTH-type transcriptional activator FasR (228 aa).

The segment at methionine 1 to glutamate 39 is disordered. The 61-residue stretch at aspartate 38–leucine 98 folds into the HTH tetR-type domain. The H-T-H motif DNA-binding region spans glycine 61–phenylalanine 80.

Homodimer.

Its activity is regulated as follows. FasR:DNA binding is regulated by long-chain acyl-CoAs (C14- to C26-CoA), which act as effector molecules that modulate the affinity of FasR for its DNA binding sequences and therefore modulate the expression of the essential fas-acpS operon. FasR activity is not affected by mycolic acid biosynthesis intermediates. Functionally, transcriptional activator that plays a central role in sensing mycobacterial long-chain fatty acids and regulating lipid biosynthesis. Activates the expression of the genes encoding the fatty acid synthase (fas) and the 4-phosphopantetheinyl transferase (acpS), whose products are involved in the fatty acid and mycolic acid biosynthesis. Specifically binds to three conserved operator sequences present in the fas-acpS promoter region. Not essential for M.tuberculosis viability, although it is required for the optimal growth in vitro and for virulence in macrophages and in a mouse model of infection. In Mycobacterium tuberculosis (strain ATCC 25618 / H37Rv), this protein is HTH-type transcriptional activator FasR.